The sequence spans 4306 residues: Cytoplasmic dynein 2 heavy chain 1 (4306 aa).

The stem stretch occupies residues 1–1650 (MAGSLSDVRK…YVQMVDSELQ (1650 aa)). 145–152 (LGVVLRKS) provides a ligand contact to ATP. Residues 669–696 (KELEGYIQKLQNAAERLATENRRLRKWH) adopt a coiled-coil conformation. AAA regions lie at residues 1651 to 1875 (YTYE…VLRG), 1941 to 2161 (SALK…KQND), 2249 to 2505 (LTAD…WVLG), and 2617 to 2862 (HYGR…ESCK). ATP is bound by residues 1689–1696 (GPAGTGKT), 1979–1986 (GPSGAGKS), 2291–2298 (GPEGCGKG), and 2655–2662 (GRSGVGRR). Positions 2880–3168 (AISSSKRKEL…AEVSKAQETI (289 aa)) are stalk. Coiled coils occupy residues 2896–2981 (LQAG…KEVQ), 3108–3199 (LETE…LATL), and 3407–3441 (IQHE…SLLE). AAA stretches follow at residues 3243-3472 (LCTE…LIQD) and 3689-3904 (MALF…VIDR).

The protein belongs to the dynein heavy chain family. The cytoplasmic dynein complex 2 is probably composed by a heavy chain DYNC2H1 homodimer and a number of DYNC2LI1 light intermediate chains. Widely expressed both in ciliated and unciliated tissues. Detected in brain and testis (at protein level).

The protein resides in the cytoplasm. The protein localises to the cytoskeleton. Its subcellular location is the cilium axoneme. It localises to the cell membrane. In terms of biological role, may function as a motor for intraflagellar retrograde transport. Functions in cilia biogenesis. May play a role in transport between endoplasmic reticulum and Golgi or organization of the Golgi in cells. The polypeptide is Cytoplasmic dynein 2 heavy chain 1 (Dync2h1) (Rattus norvegicus (Rat)).